The primary structure comprises 121 residues: Ribosome-binding factor A (121 aa).

The protein belongs to the RbfA family. Monomer. Binds 30S ribosomal subunits, but not 50S ribosomal subunits or 70S ribosomes.

It localises to the cytoplasm. In terms of biological role, one of several proteins that assist in the late maturation steps of the functional core of the 30S ribosomal subunit. Associates with free 30S ribosomal subunits (but not with 30S subunits that are part of 70S ribosomes or polysomes). Required for efficient processing of 16S rRNA. May interact with the 5'-terminal helix region of 16S rRNA. This chain is Ribosome-binding factor A, found in Clostridium tetani (strain Massachusetts / E88).